We begin with the raw amino-acid sequence, 610 residues long: UvrABC system protein C (610 aa).

The 79-residue stretch at 16–94 (SQPGVYRMYD…IKLYQPRYNV (79 aa)) folds into the GIY-YIG domain. In terms of domain architecture, UVR spans 204–239 (QQVLTQLISRMEEASRLLHFEDAARIRDQIQAVRRV).

It belongs to the UvrC family. Interacts with UvrB in an incision complex.

It localises to the cytoplasm. In terms of biological role, the UvrABC repair system catalyzes the recognition and processing of DNA lesions. UvrC both incises the 5' and 3' sides of the lesion. The N-terminal half is responsible for the 3' incision and the C-terminal half is responsible for the 5' incision. This is UvrABC system protein C from Yersinia enterocolitica serotype O:8 / biotype 1B (strain NCTC 13174 / 8081).